A 643-amino-acid polypeptide reads, in one-letter code: Alpha-dioxygenase 1 (643 aa).

Catalysis depends on His167, which acts as the Proton acceptor. Position 168 (Asp168) interacts with Ca(2+). His172 lines the heme b pocket. Thr220, Trp222, Asp224, and Ser226 together coordinate Ca(2+). 3 residues coordinate heme b: His392, Arg489, and Arg493.

The protein belongs to the peroxidase family. Heme b serves as cofactor. It depends on Ca(2+) as a cofactor.

In terms of biological role, alpha-dioxygenase that catalyzes the primary oxygenation step of a variety of 14-20 carbon fatty acids, containing up to three unsaturated bonds, into their corresponding 2R-hydroperoxides. Involved in the production of oxylipins that function in cell signaling, wound healing, and protection from infection. The lipid-derived signaling pathway is involved in the initial response of hot pepper plants to pathogen infection. The protein is Alpha-dioxygenase 1 of Capsicum annuum (Capsicum pepper).